Here is a 218-residue protein sequence, read N- to C-terminus: Large ribosomal subunit protein mL54 (218 aa).

It belongs to the mitochondrion-specific ribosomal protein mL54 family. In terms of assembly, component of the mitochondrial large ribosomal subunit (mt-LSU). Mature N.crassa 74S mitochondrial ribosomes consist of a small (37S) and a large (54S) subunit. The 37S small subunit contains a 16S ribosomal RNA (16S mt-rRNA) and 32 different proteins. The 54S large subunit contains a 23S rRNA (23S mt-rRNA) and 42 different proteins.

It is found in the mitochondrion. Component of the mitochondrial ribosome (mitoribosome), a dedicated translation machinery responsible for the synthesis of mitochondrial genome-encoded proteins, including at least some of the essential transmembrane subunits of the mitochondrial respiratory chain. The mitoribosomes are attached to the mitochondrial inner membrane and translation products are cotranslationally integrated into the membrane. In Neurospora crassa (strain ATCC 24698 / 74-OR23-1A / CBS 708.71 / DSM 1257 / FGSC 987), this protein is Large ribosomal subunit protein mL54 (mrpl37).